Here is a 236-residue protein sequence, read N- to C-terminus: Glyoxalase 3 (236 aa).

Catalysis depends on residues Cys136, His137, and Glu168. At Cys136 the chain carries Cysteine sulfinic acid (-SO2H).

It belongs to the peptidase C56 family. HSP31-like subfamily. In terms of assembly, monomer.

The enzyme catalyses methylglyoxal + H2O = (R)-lactate + H(+). Catalyzes the conversion of methylglyoxal (MG) to D-lactate in a single glutathione (GSH)-independent step. Selective for MG, does not use glyoxal as substrate. Plays a role in detoxifying endogenously produced MG, particularly when glycerol is the principal carbon source. Important for viability in stationary phase. This chain is Glyoxalase 3, found in Candida albicans (strain SC5314 / ATCC MYA-2876) (Yeast).